The following is a 319-amino-acid chain: Acetyl-coenzyme A carboxylase carboxyl transferase subunit alpha (319 aa).

The CoA carboxyltransferase C-terminal domain occupies 35 to 296 (DLDKEIEQLE…KATLLRQLAE (262 aa)).

This sequence belongs to the AccA family. Acetyl-CoA carboxylase is a heterohexamer composed of biotin carboxyl carrier protein (AccB), biotin carboxylase (AccC) and two subunits each of ACCase subunit alpha (AccA) and ACCase subunit beta (AccD).

The protein resides in the cytoplasm. It carries out the reaction N(6)-carboxybiotinyl-L-lysyl-[protein] + acetyl-CoA = N(6)-biotinyl-L-lysyl-[protein] + malonyl-CoA. The protein operates within lipid metabolism; malonyl-CoA biosynthesis; malonyl-CoA from acetyl-CoA: step 1/1. Its function is as follows. Component of the acetyl coenzyme A carboxylase (ACC) complex. First, biotin carboxylase catalyzes the carboxylation of biotin on its carrier protein (BCCP) and then the CO(2) group is transferred by the carboxyltransferase to acetyl-CoA to form malonyl-CoA. The chain is Acetyl-coenzyme A carboxylase carboxyl transferase subunit alpha from Vibrio vulnificus (strain CMCP6).